Reading from the N-terminus, the 776-residue chain is DNA topoisomerase 1 (776 aa).

The Toprim domain occupies 1 to 111 (MKLVIVESPA…VKSDDFFKRV (111 aa)). 2 residues coordinate Mg(2+): E7 and D80. One can recognise a Topo IA-type catalytic domain in the interval 132–568 (DTNLVNAQQA…FWSGFNHNIE (437 aa)). The segment at 166–171 (SAGRVQ) is interaction with DNA. The active-site O-(5'-phospho-DNA)-tyrosine intermediate is Y304. A C4-type zinc finger spans residues 600-627 (CPSCNTGELSLKLGKFGAFLACSNYPEC).

Belongs to the type IA topoisomerase family. In terms of assembly, monomer. Requires Mg(2+) as cofactor.

The enzyme catalyses ATP-independent breakage of single-stranded DNA, followed by passage and rejoining.. In terms of biological role, releases the supercoiling and torsional tension of DNA, which is introduced during the DNA replication and transcription, by transiently cleaving and rejoining one strand of the DNA duplex. Introduces a single-strand break via transesterification at a target site in duplex DNA. The scissile phosphodiester is attacked by the catalytic tyrosine of the enzyme, resulting in the formation of a DNA-(5'-phosphotyrosyl)-enzyme intermediate and the expulsion of a 3'-OH DNA strand. The free DNA strand then undergoes passage around the unbroken strand, thus removing DNA supercoils. Finally, in the religation step, the DNA 3'-OH attacks the covalent intermediate to expel the active-site tyrosine and restore the DNA phosphodiester backbone. This chain is DNA topoisomerase 1, found in Rickettsia conorii (strain ATCC VR-613 / Malish 7).